Consider the following 446-residue polypeptide: Chromosomal replication initiator protein DnaA (446 aa).

A domain I, interacts with DnaA modulators region spans residues 1 to 81 (MENISDLWNS…AKLAIRFIIP (81 aa)). The domain II stretch occupies residues 81 to 109 (PQSQAEEDIDLPPVKRNPAQDDSAHLPQS). Residues 110 to 326 (MLNPKYTFDT…GALIRVVAYS (217 aa)) are domain III, AAA+ region. Residues glycine 154, glycine 156, lysine 157, and threonine 158 each contribute to the ATP site. The domain IV, binds dsDNA stretch occupies residues 327-446 (SLINKDINAD…QVEEINGILK (120 aa)).

This sequence belongs to the DnaA family. Oligomerizes as a right-handed, spiral filament on DNA at oriC.

The protein localises to the cytoplasm. Functionally, plays an essential role in the initiation and regulation of chromosomal replication. ATP-DnaA binds to the origin of replication (oriC) to initiate formation of the DNA replication initiation complex once per cell cycle. Binds the DnaA box (a 9 base pair repeat at the origin) and separates the double-stranded (ds)DNA. Forms a right-handed helical filament on oriC DNA; dsDNA binds to the exterior of the filament while single-stranded (ss)DNA is stabiized in the filament's interior. The ATP-DnaA-oriC complex binds and stabilizes one strand of the AT-rich DNA unwinding element (DUE), permitting loading of DNA polymerase. After initiation quickly degrades to an ADP-DnaA complex that is not apt for DNA replication. Binds acidic phospholipids. The chain is Chromosomal replication initiator protein DnaA from Bacillus cereus (strain G9842).